The following is a 314-amino-acid chain: 4-hydroxy-3-methylbut-2-enyl diphosphate reductase (314 aa).

C12 contributes to the [4Fe-4S] cluster binding site. (2E)-4-hydroxy-3-methylbut-2-enyl diphosphate contacts are provided by H43 and H81. 2 residues coordinate dimethylallyl diphosphate: H43 and H81. Isopentenyl diphosphate is bound by residues H43 and H81. C103 contacts [4Fe-4S] cluster. H131 is a (2E)-4-hydroxy-3-methylbut-2-enyl diphosphate binding site. Residue H131 coordinates dimethylallyl diphosphate. H131 contributes to the isopentenyl diphosphate binding site. E133 functions as the Proton donor in the catalytic mechanism. T170 provides a ligand contact to (2E)-4-hydroxy-3-methylbut-2-enyl diphosphate. C198 contacts [4Fe-4S] cluster. 3 residues coordinate (2E)-4-hydroxy-3-methylbut-2-enyl diphosphate: S226, N228, and S271. Positions 226, 228, and 271 each coordinate dimethylallyl diphosphate. Isopentenyl diphosphate contacts are provided by S226, N228, and S271.

Belongs to the IspH family. [4Fe-4S] cluster serves as cofactor.

It catalyses the reaction isopentenyl diphosphate + 2 oxidized [2Fe-2S]-[ferredoxin] + H2O = (2E)-4-hydroxy-3-methylbut-2-enyl diphosphate + 2 reduced [2Fe-2S]-[ferredoxin] + 2 H(+). The catalysed reaction is dimethylallyl diphosphate + 2 oxidized [2Fe-2S]-[ferredoxin] + H2O = (2E)-4-hydroxy-3-methylbut-2-enyl diphosphate + 2 reduced [2Fe-2S]-[ferredoxin] + 2 H(+). It functions in the pathway isoprenoid biosynthesis; dimethylallyl diphosphate biosynthesis; dimethylallyl diphosphate from (2E)-4-hydroxy-3-methylbutenyl diphosphate: step 1/1. The protein operates within isoprenoid biosynthesis; isopentenyl diphosphate biosynthesis via DXP pathway; isopentenyl diphosphate from 1-deoxy-D-xylulose 5-phosphate: step 6/6. Functionally, catalyzes the conversion of 1-hydroxy-2-methyl-2-(E)-butenyl 4-diphosphate (HMBPP) into a mixture of isopentenyl diphosphate (IPP) and dimethylallyl diphosphate (DMAPP). Acts in the terminal step of the DOXP/MEP pathway for isoprenoid precursor biosynthesis. The polypeptide is 4-hydroxy-3-methylbut-2-enyl diphosphate reductase (Bacillus licheniformis (strain ATCC 14580 / DSM 13 / JCM 2505 / CCUG 7422 / NBRC 12200 / NCIMB 9375 / NCTC 10341 / NRRL NRS-1264 / Gibson 46)).